The following is a 218-amino-acid chain: MFALKFILITSFIASTALAHFTLDFPESRGFVSDIEGQFCGGFSTVGPRQPFPLGSGPVHINSHHSLATVVAFISTSSNPTSFDDFNTTSNGTIIPLASNIFQVTQGEKCFNIDLESLNVGLTNGSEVTLQIQYDGGDGDLYQCSDLVLIQGYEVPSNETCTDDASRTSNASSTSSGSATATSAAATSSSSGTSGAIKEVVGLGALSLALGIAGLIIL.

The N-terminal stretch at 1–19 (MFALKFILITSFIASTALA) is a signal peptide. Cu(2+) contacts are provided by His-20 and His-65. 2 disulfide bridges follow: Cys-40/Cys-144 and Cys-110/Cys-161. N-linked (GlcNAc...) asparagine glycosylation is found at Asn-87, Asn-91, and Asn-124. Asp-138 is a binding site for Cu(2+). Residues Asn-158 and Asn-170 are each glycosylated (N-linked (GlcNAc...) asparagine). Residues 160 to 194 (TCTDDASRTSNASSTSSGSATATSAAATSSSSGTS) form a disordered region. Residues 167–194 (RTSNASSTSSGSATATSAAATSSSSGTS) are compositionally biased toward low complexity. Residue Ser-190 is the site of GPI-anchor amidated serine attachment. A propeptide spans 191–218 (SGTSGAIKEVVGLGALSLALGIAGLIIL) (removed in mature form).

The protein belongs to the X325 family. Cu(2+) is required as a cofactor.

It is found in the cell membrane. Functionally, lytic polysaccharide monooxygenase-like protein that has diverged to biological functions other than polysaccharide degradation since it does not perform oxidative cleavage of polysaccharides. Cell surface-bound protein that functions in the copper-accumulation pathway shared by the CUF1-dependent copper transporter CTR1. Involved in maintaining cell wall integrity during copper deficiency. Binds Cu(2+) with an estimated 1:1 stoichiometry and might serve as an extracellular copper ligand. FRE4 and FRE7 metalloreductases probably function together with CTR1 and BIM1 to liberate the Cu(2+) bound to the BIM1 copper-binding site for subsequent import of Cu(+) into the cell by CTR1, via the reduction of BIM1-bound Cu(2+) to Cu(+) to reduce binding affinity for BIM1 but increase affinity for CTR1. Facilitates copper acquisition in the brain of mammalian hosts and acts as a copper-dependent virulence trait in fungal meningitis. While BIM1 plays a critical role in cryptococcal meningitis, at least in part through its role in copper acquisition, it could play additional roles during copper limitation or as a means to invade and colonize host tissues in the brain, by compromising host carbohydrate integrity via its lytic polysaccharide monooxygenase (LPMO) activity, which has still to be determined. This is Copper acquisition factor BIM1 from Cryptococcus neoformans var. neoformans serotype D (strain JEC21 / ATCC MYA-565) (Filobasidiella neoformans).